Consider the following 159-residue polypeptide: U-actitoxin-Avd13a/b (159 aa).

A signal peptide spans 1–18 (MKSIFLVFFAVCLVKAEA). The propeptide occupies 19-26 (GKGRKREP). Disulfide bonds link Cys-33–Cys-45 and Cys-36–Cys-52. The propeptide occupies 59 to 60 (EP). 2 disulfide bridges follow: Cys-67–Cys-79 and Cys-70–Cys-86. A propeptide spanning residues 93–94 (EP) is cleaved from the precursor. 2 disulfides stabilise this stretch: Cys-101-Cys-113 and Cys-104-Cys-120. A propeptide spanning residues 127-128 (EP) is cleaved from the precursor. 2 cysteine pairs are disulfide-bonded: Cys-135–Cys-147 and Cys-138–Cys-154.

It belongs to the sea anemone BBH family.

It is found in the secreted. The protein resides in the nematocyst. In terms of biological role, inhibits ion channels. In Anemonia viridis (Snakelocks anemone), this protein is U-actitoxin-Avd13a/b.